Consider the following 214-residue polypeptide: Adenylate kinase (214 aa).

10–15 (GAGKGT) is an ATP binding site. The segment at 30–59 (STGDMLRAAVKAGTPLGLEAKKVMDAGQLV) is NMP. AMP contacts are provided by residues threonine 31, arginine 36, 57 to 59 (QLV), 85 to 88 (GFPR), and glutamine 92. The segment at 122–159 (GRRVHPGSGRVYHIVFNQPKVEGKDDVTGEDLAIRPDD) is LID. ATP is bound by residues arginine 123 and 132-133 (VY). Arginine 156 and arginine 167 together coordinate AMP. Residue glutamine 200 participates in ATP binding.

This sequence belongs to the adenylate kinase family. As to quaternary structure, monomer.

The protein localises to the cytoplasm. The catalysed reaction is AMP + ATP = 2 ADP. Its pathway is purine metabolism; AMP biosynthesis via salvage pathway; AMP from ADP: step 1/1. Its function is as follows. Catalyzes the reversible transfer of the terminal phosphate group between ATP and AMP. Plays an important role in cellular energy homeostasis and in adenine nucleotide metabolism. This is Adenylate kinase from Shewanella piezotolerans (strain WP3 / JCM 13877).